Reading from the N-terminus, the 142-residue chain is Lutropin subunit beta (142 aa).

Positions 1–21 (MEMLQGLLLLWLLLNVGGVWT) are cleaved as a signal peptide. 6 disulfide bridges follow: cysteine 30–cysteine 78, cysteine 44–cysteine 93, cysteine 47–cysteine 131, cysteine 55–cysteine 109, cysteine 59–cysteine 111, and cysteine 114–cysteine 121. A glycan (N-linked (GlcNAc...) asparagine) is linked at asparagine 34.

The protein belongs to the glycoprotein hormones subunit beta family. As to quaternary structure, heterodimer of a common alpha chain and a unique beta chain which confers biological specificity to thyrotropin, lutropin, follitropin and gonadotropin.

It localises to the secreted. Functionally, promotes spermatogenesis and ovulation by stimulating the testes and ovaries to synthesize steroids. The sequence is that of Lutropin subunit beta (LHB) from Panthera tigris altaica (Siberian tiger).